The sequence spans 30 residues: Kalata-B16 (30 aa).

The cyclopeptide (Gly-Asp) cross-link spans 1–30; the sequence is GIPCAESCVYIPCTITALLGCKCQDKVCYD. Cystine bridges form between Cys-4-Cys-21, Cys-8-Cys-23, and Cys-13-Cys-28.

In terms of processing, this is a cyclic peptide.

Its function is as follows. Probably participates in a plant defense mechanism. The polypeptide is Kalata-B16 (Oldenlandia affinis).